The sequence spans 692 residues: MARQFPLEKTRNIGIMAHIDAGKTTTTERILFYTGRVHKIGEVHEGTATMDWMAQEQERGITITSAATSCRWRDCQINIIDTPGHVDFTVEVERSLRVLDGAVAVFCSVGGVEPQSETVWRQADKYGVPRIAYINKMDRVGADFHRGIQMIRERLGANPVAIQLPIGVEDGFCGVVDLVRNRAIIYTDDLGTTSEETEIPPELAGEAAAFRERLIEAVAEFDESLMEKYLENGELTEEEIKEGLRRATLAVKIVPVLCGSSFKNKGVQPLLDAIVDYLPAPTDIPAIRGVNPVSGAGEVREARDDEPFSALAFKIMTDPYVGKLTFFRVYSGRLKSGSYVYNSTRNRRERVGRILRMHANHREDIEEVCAGDIVAAVGLKTTTTGDTLCDEKEPVILESMEFPEPVIQVAIEPKTKADQEKMGVALQKLAEEDPTFRVSTDPETGQTLISGMGELHLEIIVDRMMREFKVEANVGRPQVAYKETVRKKARAEGKFIRQTGGRGQYGHVVLEVEPREPGSGYLFTSKIIGGVIPKEYIPAVDAGAKEAMENGVLAGFPVIDVGVTLLDGSYHEVDSSEMAFKIAGSIGFKDAARRADPVLLEPVMKVEVVVNEEYMGDVIGDLNSRRGRIEEMEARNGMQVIHAYVPLAEMFGYATDLRSRTQGRGNYTMQFSHYAQVPDNIAEGIIARRVGR.

Residues 8 to 282 (EKTRNIGIMA…AIVDYLPAPT (275 aa)) form the tr-type G domain. GTP is bound by residues 17-24 (AHIDAGKT), 81-85 (DTPGH), and 135-138 (NKMD).

The protein belongs to the TRAFAC class translation factor GTPase superfamily. Classic translation factor GTPase family. EF-G/EF-2 subfamily.

Its subcellular location is the cytoplasm. In terms of biological role, catalyzes the GTP-dependent ribosomal translocation step during translation elongation. During this step, the ribosome changes from the pre-translocational (PRE) to the post-translocational (POST) state as the newly formed A-site-bound peptidyl-tRNA and P-site-bound deacylated tRNA move to the P and E sites, respectively. Catalyzes the coordinated movement of the two tRNA molecules, the mRNA and conformational changes in the ribosome. This Pelotomaculum thermopropionicum (strain DSM 13744 / JCM 10971 / SI) protein is Elongation factor G.